The chain runs to 114 residues: T cell receptor beta variable 5-1 (114 aa).

The signal sequence occupies residues 1–21 (MGSRLLCWVLLCLLGAGPVKA). Residues 22–114 (GVTQTPRYLI…SALYLCASSL (93 aa)) form the Ig-like domain. Cysteines 42 and 110 form a disulfide. N96 is a glycosylation site (N-linked (GlcNAc...) asparagine).

Alpha-beta TR is a heterodimer composed of an alpha and beta chain; disulfide-linked. The alpha-beta TR is associated with the transmembrane signaling CD3 coreceptor proteins to form the TR-CD3 (TcR or TCR). The assembly of alpha-beta TR heterodimers with CD3 occurs in the endoplasmic reticulum where a single alpha-beta TR heterodimer associates with one CD3D-CD3E heterodimer, one CD3G-CD3E heterodimer and one CD247 homodimer forming a stable octameric structure. CD3D-CD3E and CD3G-CD3E heterodimers preferentially associate with TR alpha and TR beta chains, respectively. The association of the CD247 homodimer is the last step of TcR assembly in the endoplasmic reticulum and is required for transport to the cell surface.

It is found in the cell membrane. Its function is as follows. V region of the variable domain of T cell receptor (TR) beta chain that participates in the antigen recognition. Alpha-beta T cell receptors are antigen specific receptors which are essential to the immune response and are present on the cell surface of T lymphocytes. Recognize peptide-major histocompatibility (MH) (pMH) complexes that are displayed by antigen presenting cells (APC), a prerequisite for efficient T cell adaptive immunity against pathogens. Binding of alpha-beta TR to pMH complex initiates TR-CD3 clustering on the cell surface and intracellular activation of LCK that phosphorylates the ITAM motifs of CD3G, CD3D, CD3E and CD247 enabling the recruitment of ZAP70. In turn ZAP70 phosphorylates LAT, which recruits numerous signaling molecules to form the LAT signalosome. The LAT signalosome propagates signal branching to three major signaling pathways, the calcium, the mitogen-activated protein kinase (MAPK) kinase and the nuclear factor NF-kappa-B (NF-kB) pathways, leading to the mobilization of transcription factors that are critical for gene expression and essential for T cell growth and differentiation. The T cell repertoire is generated in the thymus, by V-(D)-J rearrangement. This repertoire is then shaped by intrathymic selection events to generate a peripheral T cell pool of self-MH restricted, non-autoaggressive T cells. Post-thymic interaction of alpha-beta TR with the pMH complexes shapes TR structural and functional avidity. In Homo sapiens (Human), this protein is T cell receptor beta variable 5-1.